The primary structure comprises 420 residues: MKTLIARHKAGEHIGICSVCSAHPLVIEAALAFDRNSTRKVLIEATSNQVNQFGGYTGMTPADFREFVFTIADKVGFARERIILGGDHLGPNCWQQENADAAMEKSVELVKAYVRAGFSKIHLDASMSCAGDPIPLAPETVAERAAVLCFAAESVATDCQREQLSYVIGTEVPVPGGEASAIQSVHITHVEDAANTLRTHQKAFIARGLTEALTRVIAIVVQPGVEFDHSNIIHYQPQEAQALAQWIENTRMVYEAHSTDYQTRTAYWELVRDHFAILKVGPALTFALREAIFALAQIEQELIAPENRSGCLAVIEEVMLDEPQYWKKYYRTGFNDSLLDIRYSLSDRIRYYWPHSRIKNSVETMMVNLEGVDTPLGMISQYLPKQFERIQSGELSAIPHQLIMDKIYDVLRAYRYGCAE.

This sequence belongs to the GatZ/KbaZ family. GatZ subfamily. In terms of assembly, forms a complex with GatY.

Its pathway is carbohydrate metabolism; D-tagatose 6-phosphate degradation; D-glyceraldehyde 3-phosphate and glycerone phosphate from D-tagatose 6-phosphate: step 2/2. In terms of biological role, component of the tagatose-1,6-bisphosphate aldolase GatYZ that is required for full activity and stability of the Y subunit. Could have a chaperone-like function for the proper and stable folding of GatY. When expressed alone, GatZ does not show any aldolase activity. Is involved in the catabolism of galactitol. This chain is D-tagatose-1,6-bisphosphate aldolase subunit GatZ, found in Escherichia coli O8 (strain IAI1).